Reading from the N-terminus, the 749-residue chain is Catalase-peroxidase 2 (749 aa).

Positions 1–27 (MFKRTIPLFAAFTLAISPSIFPNYAHA) are cleaved as a signal peptide. The tryptophyl-tyrosyl-methioninium (Trp-Tyr) (with M-255) cross-link spans 107-229 (WHAAGTYRIY…LAATVMGLIY (123 aa)). Residue H108 is the Proton acceptor of the active site. A cross-link (tryptophyl-tyrosyl-methioninium (Tyr-Met) (with W-107)) is located at residues 229-255 (YVNPEGPNGVPDPLAAAEKIRETFGRM). H270 is a heme b binding site.

The protein belongs to the peroxidase family. Peroxidase/catalase subfamily. In terms of assembly, homodimer or homotetramer. Heme b is required as a cofactor. Formation of the three residue Trp-Tyr-Met cross-link is important for the catalase, but not the peroxidase activity of the enzyme.

It carries out the reaction H2O2 + AH2 = A + 2 H2O. The enzyme catalyses 2 H2O2 = O2 + 2 H2O. Functionally, bifunctional enzyme with both catalase and broad-spectrum peroxidase activity. The sequence is that of Catalase-peroxidase 2 from Legionella pneumophila subsp. pneumophila (strain Philadelphia 1 / ATCC 33152 / DSM 7513).